The primary structure comprises 386 residues: Cytochrome b (386 aa).

4 helical membrane-spanning segments follow: residues 32–52, 76–98, 113–133, and 179–199; these read FGSL…TLAM, WLIR…LHMG, TWNI…LGYV, and FFSL…MHLI. Residues histidine 82 and histidine 96 each contribute to the heme b site. Histidine 183 and histidine 197 together coordinate heme b. Histidine 202 lines the a ubiquinone pocket. The next 4 helical transmembrane spans lie at 226-246, 290-310, 322-342, and 349-369; these read FLFK…IFVL, TLGV…PYLD, LSKI…ILGA, and FIIF…IITP.

This sequence belongs to the cytochrome b family. In terms of assembly, fungal cytochrome b-c1 complex contains 10 subunits; 3 respiratory subunits, 2 core proteins and 5 low-molecular weight proteins. Cytochrome b-c1 complex is a homodimer. The cofactor is heme b.

It is found in the mitochondrion inner membrane. In terms of biological role, component of the ubiquinol-cytochrome c reductase complex (complex III or cytochrome b-c1 complex) that is part of the mitochondrial respiratory chain. The b-c1 complex mediates electron transfer from ubiquinol to cytochrome c. Contributes to the generation of a proton gradient across the mitochondrial membrane that is then used for ATP synthesis. The polypeptide is Cytochrome b (COB) (Trichophyton rubrum (Athlete's foot fungus)).